A 353-amino-acid chain; its full sequence is Photosystem II protein D1 (353 aa).

At threonine 2 the chain carries N-acetylthreonine. Threonine 2 carries the post-translational modification Phosphothreonine. 3 helical membrane-spanning segments follow: residues tyrosine 29–serine 46, histidine 118–leucine 133, and tryptophan 142–alanine 156. Residue histidine 118 participates in chlorophyll a binding. Tyrosine 126 contributes to the pheophytin a binding site. Residues aspartate 170 and glutamate 189 each coordinate [CaMn4O5] cluster. The helical transmembrane segment at phenylalanine 197–leucine 218 threads the bilayer. Residue histidine 198 participates in chlorophyll a binding. Residues histidine 215 and serine 264–phenylalanine 265 contribute to the a quinone site. Position 215 (histidine 215) interacts with Fe cation. Histidine 272 is a binding site for Fe cation. The helical transmembrane segment at phenylalanine 274 to leucine 288 threads the bilayer. Positions 332, 333, 342, and 344 each coordinate [CaMn4O5] cluster. Residues alanine 345–glycine 353 constitute a propeptide that is removed on maturation.

The protein belongs to the reaction center PufL/M/PsbA/D family. As to quaternary structure, PSII is composed of 1 copy each of membrane proteins PsbA, PsbB, PsbC, PsbD, PsbE, PsbF, PsbH, PsbI, PsbJ, PsbK, PsbL, PsbM, PsbT, PsbX, PsbY, PsbZ, Psb30/Ycf12, at least 3 peripheral proteins of the oxygen-evolving complex and a large number of cofactors. It forms dimeric complexes. The D1/D2 heterodimer binds P680, chlorophylls that are the primary electron donor of PSII, and subsequent electron acceptors. It shares a non-heme iron and each subunit binds pheophytin, quinone, additional chlorophylls, carotenoids and lipids. D1 provides most of the ligands for the Mn4-Ca-O5 cluster of the oxygen-evolving complex (OEC). There is also a Cl(-1) ion associated with D1 and D2, which is required for oxygen evolution. The PSII complex binds additional chlorophylls, carotenoids and specific lipids. serves as cofactor. Tyr-161 forms a radical intermediate that is referred to as redox-active TyrZ, YZ or Y-Z. Post-translationally, C-terminally processed by CTPA; processing is essential to allow assembly of the oxygen-evolving complex and thus photosynthetic growth.

The protein localises to the plastid membrane. It carries out the reaction 2 a plastoquinone + 4 hnu + 2 H2O = 2 a plastoquinol + O2. Functionally, photosystem II (PSII) is a light-driven water:plastoquinone oxidoreductase that uses light energy to abstract electrons from H(2)O, generating O(2) and a proton gradient subsequently used for ATP formation. It consists of a core antenna complex that captures photons, and an electron transfer chain that converts photonic excitation into a charge separation. The D1/D2 (PsbA/PsbD) reaction center heterodimer binds P680, the primary electron donor of PSII as well as several subsequent electron acceptors. The sequence is that of Photosystem II protein D1 from Cuscuta reflexa (Southern Asian dodder).